The sequence spans 237 residues: MTLMSSLNTLFPGQPPKFEPHITISSNIDVDLDHPDKTKSDVYRILSASLVAIDSLPKNHSNLVTLGKVDSQRKFFKKLYFQVARDPNLVSFATIIRELFVQLPADIEQENMKKNPHLYTTDSHGNTVKKKSKQSQDGRIEAIDMPRIQSEAQEQASLWSVTEFDPHLSLVYNDLHPIDSALWRTIKTRIQDYLNIDNCDSDDLTDNGLGWDNGILKLVLCEGDVNDWVVLGSADLH.

The Proton donor/acceptor role is filled by His21. Thr23 lines the substrate pocket. Residues 117–137 (HLYTTDSHGNTVKKKSKQSQD) are disordered. His167 serves as the catalytic Proton donor/acceptor. Substrate contacts are provided by Ser169 and Tyr172.

Belongs to the 2H phosphoesterase superfamily. CPD1 family.

Its subcellular location is the golgi apparatus. The enzyme catalyses a nucleoside 2',3'-cyclic phosphate + H2O = a nucleoside 2'-phosphate + H(+). In terms of biological role, involved in the metabolism of ADP-ribose 1',2'-cyclic phosphate which is produced as a consequence of tRNA splicing. This Debaryomyces hansenii (strain ATCC 36239 / CBS 767 / BCRC 21394 / JCM 1990 / NBRC 0083 / IGC 2968) (Yeast) protein is 2',3'-cyclic-nucleotide 3'-phosphodiesterase (CPD1).